The primary structure comprises 305 residues: Phosphoribosylaminoimidazole-succinocarboxamide synthase (305 aa).

Belongs to the SAICAR synthetase family.

The catalysed reaction is 5-amino-1-(5-phospho-D-ribosyl)imidazole-4-carboxylate + L-aspartate + ATP = (2S)-2-[5-amino-1-(5-phospho-beta-D-ribosyl)imidazole-4-carboxamido]succinate + ADP + phosphate + 2 H(+). It participates in purine metabolism; IMP biosynthesis via de novo pathway; 5-amino-1-(5-phospho-D-ribosyl)imidazole-4-carboxamide from 5-amino-1-(5-phospho-D-ribosyl)imidazole-4-carboxylate: step 1/2. This chain is Phosphoribosylaminoimidazole-succinocarboxamide synthase, found in Polaromonas naphthalenivorans (strain CJ2).